We begin with the raw amino-acid sequence, 125 residues long: Histone H1-like protein Hc1 (125 aa).

Positions 98–125 (TKAKVKPTKKAAPKTKVKTAKKTRSTKK) are disordered. Positions 100 to 125 (AKVKPTKKAAPKTKVKTAKKTRSTKK) are enriched in basic residues.

This sequence belongs to the histone H1/H5 family. HCT subfamily.

In terms of biological role, might have a role analogous to that of eukaryotic histone proteins. In Chlamydia trachomatis serovar L2 (strain ATCC VR-902B / DSM 19102 / 434/Bu), this protein is Histone H1-like protein Hc1 (hctA).